The chain runs to 398 residues: Aurofusarin biosynthesis regulatory protein aurR1 (398 aa).

A DNA-binding region (zn(2)-C6 fungal-type) is located at residues 18–45 (CDNCAKSKVRCGKEQPWCQRCERRGQVC). Disordered regions lie at residues 52–73 (RSRKRTLDAAHPESDQRNGTPP) and 275–314 (AATIDDHTSPTPSNDGKDTERSVSRDTNVSQDGSEPSSLI). 2 stretches are compositionally biased toward basic and acidic residues: residues 56–67 (RTLDAAHPESDQ) and 289–298 (DGKDTERSVS). Over residues 299–311 (RDTNVSQDGSEPS) the composition is skewed to polar residues.

The protein localises to the nucleus. Functionally, transcription factor that specifically regulates the expression of the gene cluster that mediates the biosynthesis of aurofusarin, a red mycelium pigment which is acting as a mycotoxin. In Gibberella zeae (strain ATCC MYA-4620 / CBS 123657 / FGSC 9075 / NRRL 31084 / PH-1) (Wheat head blight fungus), this protein is Aurofusarin biosynthesis regulatory protein aurR1.